We begin with the raw amino-acid sequence, 89 residues long: Large ribosomal subunit protein bL28 (89 aa).

It belongs to the bacterial ribosomal protein bL28 family.

This is Large ribosomal subunit protein bL28 from Chlamydia trachomatis serovar L2 (strain ATCC VR-902B / DSM 19102 / 434/Bu).